We begin with the raw amino-acid sequence, 2388 residues long: Highly reducing polyketide synthase Preu1 (2388 aa).

A Ketosynthase family 3 (KS3) domain is found at 7–432 (NDDIAIVGLA…GTNAHVILDD (426 aa)). Catalysis depends on for beta-ketoacyl synthase activity residues cysteine 180, histidine 315, and histidine 355. A malonyl-CoA:ACP transacylase (MAT) domain region spans residues 549–875 (GFVFTGQGAQ…SSVLMRGEDG (327 aa)). The For malonyltransferase activity role is filled by serine 641. The tract at residues 940-1074 (HDLLGAPTQD…GLGKIHYRPE (135 aa)) is N-terminal hotdog fold. Positions 940–1256 (HDLLGAPTQD…CRELPNGNSQ (317 aa)) constitute a PKS/mFAS DH domain. Residues 941 to 1251 (DLLGAPTQDS…VEGLRCRELP (311 aa)) are dehydratase (DH) domain. The Proton acceptor; for dehydratase activity role is filled by histidine 972. The C-terminal hotdog fold stretch occupies residues 1102-1256 (TASISPVDFY…CRELPNGNSQ (155 aa)). Aspartate 1167 serves as the catalytic Proton donor; for dehydratase activity. The interval 1676–1983 (KLPSDARFTS…VPTGLGKAVL (308 aa)) is enoyl reductase (ER) domain. The tract at residues 2007–2191 (ATYVLAGGLG…AATSVDLGLM (185 aa)) is ketoreductase (KR) domain. In terms of domain architecture, Carrier spans 2303 to 2380 (QANGIVLEAL…ALAEKISKAS (78 aa)). Serine 2340 bears the O-(pantetheine 4'-phosphoryl)serine mark.

Pantetheine 4'-phosphate is required as a cofactor.

Highly reducing polyketide synthase; part of a gene cluster that mediates the biosynthesis of a yet unidentified natural product. This is Highly reducing polyketide synthase Preu1 from Preussia isomera (Coprophilous fungus).